Reading from the N-terminus, the 314-residue chain is MISLRQHAVSLAAVFLALAMGVVLGSGFFSDTLLSSLRSEKRDLYTQIDRLTDQRDALREKLSAADNFDIQVGSRIVHDALVGKSVVIFRTPDAHDDDIAAVSKIVGQAGGAVTATVSLTQEFVEANSAEKLRSVVNSSILPAGSQLSTKLVDQGSQAGDLLGIALLSNADPAAPTVEQAQRDTVLAALRETGFITYQPRDRIGTANATVVVTGGALSTDAGNQGVSVARFAAALAPRGSGTLLAGRDGSANRPAAVAVTRADADMAAEISTVDDIDAEPGRITVILALHDLINGGHVGHYGTGHGAMSVTVSQ.

The signal sequence occupies residues methionine 1–serine 30.

It belongs to the MctB (TC 1.B.50) family.

The protein localises to the cell outer membrane. In terms of biological role, pore-forming protein, which is involved in efflux of copper across the outer membrane. Essential for copper resistance and maintenance of a low intracellular copper concentration. In Mycobacterium bovis (strain ATCC BAA-935 / AF2122/97), this protein is Copper transporter MctB (mctB).